The chain runs to 190 residues: Elongation factor P (190 aa).

This sequence belongs to the elongation factor P family.

Its subcellular location is the cytoplasm. Its pathway is protein biosynthesis; polypeptide chain elongation. In terms of biological role, involved in peptide bond synthesis. Stimulates efficient translation and peptide-bond synthesis on native or reconstituted 70S ribosomes in vitro. Probably functions indirectly by altering the affinity of the ribosome for aminoacyl-tRNA, thus increasing their reactivity as acceptors for peptidyl transferase. The polypeptide is Elongation factor P (Persephonella marina (strain DSM 14350 / EX-H1)).